We begin with the raw amino-acid sequence, 327 residues long: Protein MRG2 (327 aa).

The segment at 1–40 is disordered; the sequence is MGSPNAAAETDLTTDDFIGDTRRDSGSDTETNTDCDGEDL. Positions 52-101 constitute a Tudor-knot domain; sequence FEEGERVLAKHSDCFYEAKVLKVEFKDNEWKYFVHYIGWNKSWDEWIRLD. The interval 133 to 156 is disordered; the sequence is SKMKPRSPNVARGRKRKQDSVDTE. The 166-residue stretch at 162-327 folds into the MRG domain; it reads SDNLLSFNIP…AVEEMEKKEG (166 aa).

In terms of assembly, interacts with HAM1 and HAM2. Interacts (via MRG domain) with CO. Component of the NuA4 histone acetyltransferase complex. In terms of tissue distribution, ubiquitous. Mainly expressed in the vasculature of cotyledons and leaves, and in roots and inflorescences.

It localises to the nucleus. Functionally, chromatin remodeling factor. Acts as a 'reader' protein by binding to H3K4me3 and H3K36me3 to control histone H4 acetylation. Increases the transcriptional levels of the flowering time genes FLC and FT. Binds the chromatin at the FT promoter upon interaction with CO. This Arabidopsis thaliana (Mouse-ear cress) protein is Protein MRG2.